We begin with the raw amino-acid sequence, 354 residues long: MSKYWSNITKDIEPYVCGEQPKNKKIIKLNTNENPYPPSPKVLQAIENAAKDDLRLYPDPNCDALRKTIANYYNLSKEEVFIGNGSDEVLSLSFLTFFNPEETIVFSDISYSFYPVYANLYKLDYKLAKLKEDFSIDINDFKNARGGAVITNPNAPTGVYLSLDSIKQILEDNINNVVMVDEAYIDFGGESSVSLIKDYPNLLVIQTLSKSRSLAGMRIGFALGQKELIEGLNRIKNSFNSYTIDRISSLAAIEAIKDEEYFKECTLKVIKTRNWTINELGKIGFKIIPSKANFIFITHDTYQAEDIFIKLKDENVLVRYFNKDRISNYLRVSIGSKEEMEIFMDKIKKIINKL.

Position 210 is an N6-(pyridoxal phosphate)lysine (lysine 210).

It belongs to the class-II pyridoxal-phosphate-dependent aminotransferase family. Histidinol-phosphate aminotransferase subfamily. Homodimer. Pyridoxal 5'-phosphate serves as cofactor.

It catalyses the reaction L-histidinol phosphate + 2-oxoglutarate = 3-(imidazol-4-yl)-2-oxopropyl phosphate + L-glutamate. It participates in amino-acid biosynthesis; L-histidine biosynthesis; L-histidine from 5-phospho-alpha-D-ribose 1-diphosphate: step 7/9. The polypeptide is Histidinol-phosphate aminotransferase (Clostridium botulinum (strain Kyoto / Type A2)).